The following is a 129-amino-acid chain: MDPQKALSRTLLLLLFLHLSLLGCRSHPLGGPGSASELPGLQELLDRLRDRVSELQAEQLRVEPLQQGQGLEETWDSPAAAPAGFLGPHHSLLQALRGPKMMRDSGCFGRRLDRIGSLSGLGCNVLRRY.

The N-terminal stretch at 1-26 is a signal peptide; it reads MDPQKALSRTLLLLLFLHLSLLGCRS. A disulfide bond links cysteine 107 and cysteine 123.

Belongs to the natriuretic peptide family. Post-translationally, the precursor molecule is proteolytically cleaved, possibly by FURIN or CORIN, to produce the active peptide. May undergo further proteolytic cleavage by various proteases such as DPP4, MME and possibly FAP, to give rise to a variety of shorter peptides. May be cleaved at Pro-99 by the prolyl endopeptidase FAP (seprase) activity (in vitro). May be degraded by IDE. During IDE degradation, the resulting products initially increase the activation of NPR1 and can also stimulate NPR2 to produce cGMP before the fragments are completely degraded and inactivated by IDE (in vitro).

The protein localises to the secreted. Its function is as follows. Cardiac hormone that plays a key role in mediating cardio-renal homeostasis. May also function as a paracrine antifibrotic factor in the heart. Acts by specifically binding and stimulating NPR1 to produce cGMP, which in turn activates effector proteins that drive various biological responses. Involved in regulating the extracellular fluid volume and maintaining the fluid-electrolyte balance through natriuresis, diuresis, vasorelaxation, and inhibition of renin and aldosterone secretion. Binds the clearance receptor NPR3. In Ovis aries (Sheep), this protein is Natriuretic peptides B (NPPB).